The primary structure comprises 536 residues: B3 domain-containing protein Os03g0619800 (536 aa).

The segment at residues 26–119 (MRCFLRRMAA…RYEVLILDSD (94 aa)) is a DNA-binding region (TF-B3 1). Residues 138 to 199 (DKTVDPVDSS…VEPQTPSGSD (62 aa)) are disordered. Composition is skewed to low complexity over residues 145–160 (DSSG…SSRS) and 171–183 (SSSE…SPSG). Positions 231-330 (VAVMKKCNLQ…AFTVHLLQAE (100 aa)) form a DNA-binding region, TF-B3 2. Positions 335-396 (RDGTDVHKIG…SDGPSEPPYI (62 aa)) are disordered. Residues 344–355 (GSSQNKRNSKMA) are compositionally biased toward polar residues. The span at 372–382 (SNKHGVSHESL) shows a compositional bias: basic and acidic residues. The TF-B3 3 DNA-binding region spans 429 to 529 (ISKLAGSGGK…TMEVHIISNL (101 aa)).

It is found in the nucleus. The chain is B3 domain-containing protein Os03g0619800 from Oryza sativa subsp. japonica (Rice).